The following is a 33-amino-acid chain: Pardaxin P-2 (33 aa).

The protein belongs to the pardaxin family. In terms of assembly, in aqueous solution exists as a tetramer.

The protein resides in the secreted. It is found in the target cell membrane. Its function is as follows. Exhibits unusual shark repellent and surfactant properties. Forms voltage-dependent, ion-permeable channels in membranes. At high concentration causes cell membrane lysis. This is Pardaxin P-2 from Pardachirus pavoninus (Peacock sole).